A 387-amino-acid chain; its full sequence is MQVFWFIPTHGDSRYLGTSEGAREVGIDYLKQVAVAADTLGYEGVLIPTGRSCEDPWVVASALAAVTQKLRFLVAVRPGLMTPTLAARMAATFDRISGGRLLVNLVTGGDVAELEGDGLFLDHAARYEASSEFIRIWRDVLAASHDSGEISFKGRHLRVKGARVLYPPLQRPHPPVYFGGSSAAAHELAGEQVDTYLTWGEPPADVALKLADVRKHAERHGRTVKFGIRLHVIVRETEAAAWAAADDLISRLDDETVARAQAVFAKMDSEGQRRMAALHAGGSKRTREALEISPNLWAGVGLVRGGAGTALVGDPHQVAARIREYSELGIDTFVLSGYPHLEEAYRFAELVFPLLPLAVRNKLPGQVLSGPFGEVMATGIVPRASQS.

The protein belongs to the SsuD family.

It catalyses the reaction an alkanesulfonate + FMNH2 + O2 = an aldehyde + FMN + sulfite + H2O + 2 H(+). Catalyzes the desulfonation of aliphatic sulfonates. This is Alkanesulfonate monooxygenase from Cupriavidus pinatubonensis (strain JMP 134 / LMG 1197) (Cupriavidus necator (strain JMP 134)).